A 914-amino-acid polypeptide reads, in one-letter code: PHD finger protein 14 (914 aa).

The disordered stretch occupies residues 19–276 (DALDYDSSDD…EDSLLERPQT (258 aa)). Residues 53 to 68 (ESAAGSESDSDAAAAS) are compositionally biased toward low complexity. The span at 90–102 (EKVKESFSEETSS) shows a compositional bias: basic and acidic residues. 2 stretches are compositionally biased toward acidic residues: residues 155–168 (ELNE…EDDN) and 191–233 (GEED…DSEE). Residues 285–346 (ILICCVCLGD…PWFCDACKNG (62 aa)) form a PHD-type 1 zinc finger. Residues cysteine 288, cysteine 291, cysteine 305, cysteine 308, histidine 313, cysteine 316, cysteine 340, cysteine 343, cysteine 351, cysteine 354, histidine 371, cysteine 374, cysteine 407, cysteine 410, cysteine 424, cysteine 429, histidine 434, cysteine 437, cysteine 461, and histidine 464 each coordinate Zn(2+). Residues 348-381 (SPSCELCPSQDGIFKETDAGRWVHVVCALYVPGV) form a C2HC pre-PHD-type zinc finger. The segment at 405-465 (KECSLCEDTR…PFFAYCKQHA (61 aa)) adopts a PHD-type 2 zinc-finger fold. A coiled-coil region spans residues 596-644 (MIQIQDNIVEQKNLKDKLESEQEKLHMEYDKLCESLEDLQNVNGQLRTE). The PHD-type 3 zinc finger occupies 692–746 (LYSCGICKKNQDQHLLLLCDTCKLHYHLGCLDPPLTRMPKKTKNSYWQCSECDQA). The Zn(2+) site is built by cysteine 695, cysteine 698, cysteine 710, cysteine 713, histidine 718, cysteine 721, cysteine 740, and cysteine 743. The interval 777-838 (PQEMSPEPKK…PKADDTRTEC (62 aa)) is disordered. Residues 792–802 (TRTRGQKRKRM) are compositionally biased toward basic residues. Over residues 803 to 817 (SICEEEKMEEPLPRE) the composition is skewed to basic and acidic residues. Residues 835 to 888 (RTECTTCKGPGDNENLVRCDECRLCYHFGCLDPPLKKSPKQTGYGWICQECDTS) form a PHD-type 4 zinc finger. 8 residues coordinate Zn(2+): cysteine 838, cysteine 841, cysteine 853, cysteine 856, histidine 861, cysteine 864, cysteine 882, and cysteine 885. A disordered region spans residues 887–914 (TSSSKEEEAQEVEEESVNEETAEQEIPD). A compositionally biased stretch (acidic residues) spans 894-914 (EAQEVEEESVNEETAEQEIPD).

In terms of assembly, interacts with histone H3.

It is found in the nucleus. Histone-binding protein. Binds preferentially to unmodified histone H3 but can also bind to a lesser extent to histone H3 trimethylated at 'Lys-9' (H3K9me3) as well as to histone H3 monomethylated at 'Lys-27' (H3K27ac) and trimethylated at 'Lys-27' (H3K27me3). Represses PDGFRA expression, thus playing a role in regulation of mesenchymal cell proliferation. This chain is PHD finger protein 14, found in Danio rerio (Zebrafish).